A 569-amino-acid polypeptide reads, in one-letter code: AsmA family protein YicH (569 aa).

At 1-6 (MKFIGK) the chain is on the cytoplasmic side. A helical transmembrane segment spans residues 7–27 (LLLYILIALLVAIAGLYFLLQ). Residues 28–569 (TRWGAEHISA…GEVTSTEPVR (542 aa)) lie on the Periplasmic side of the membrane.

This sequence belongs to the AsmA family.

Its subcellular location is the cell inner membrane. The chain is AsmA family protein YicH (yicH) from Escherichia coli (strain K12).